Here is a 252-residue protein sequence, read N- to C-terminus: Phosphoglycolate phosphatase (252 aa).

Asp-13 (nucleophile) is an active-site residue. Mg(2+) is bound by residues Asp-13, Asp-15, and Asp-192.

It belongs to the HAD-like hydrolase superfamily. CbbY/CbbZ/Gph/YieH family. Monomer. It depends on Mg(2+) as a cofactor. Chloride is required as a cofactor.

The catalysed reaction is 2-phosphoglycolate + H2O = glycolate + phosphate. Its pathway is organic acid metabolism; glycolate biosynthesis; glycolate from 2-phosphoglycolate: step 1/1. Functionally, specifically catalyzes the dephosphorylation of 2-phosphoglycolate. Is involved in the dissimilation of the intracellular 2-phosphoglycolate formed during the DNA repair of 3'-phosphoglycolate ends, a major class of DNA lesions induced by oxidative stress. The protein is Phosphoglycolate phosphatase of Salmonella paratyphi A (strain ATCC 9150 / SARB42).